A 369-amino-acid chain; its full sequence is Anhydro-N-acetylmuramic acid kinase (369 aa).

An ATP-binding site is contributed by 12–19 (GTSMDGVD).

The protein belongs to the anhydro-N-acetylmuramic acid kinase family.

It catalyses the reaction 1,6-anhydro-N-acetyl-beta-muramate + ATP + H2O = N-acetyl-D-muramate 6-phosphate + ADP + H(+). The protein operates within amino-sugar metabolism; 1,6-anhydro-N-acetylmuramate degradation. Its pathway is cell wall biogenesis; peptidoglycan recycling. Functionally, catalyzes the specific phosphorylation of 1,6-anhydro-N-acetylmuramic acid (anhMurNAc) with the simultaneous cleavage of the 1,6-anhydro ring, generating MurNAc-6-P. Is required for the utilization of anhMurNAc either imported from the medium or derived from its own cell wall murein, and thus plays a role in cell wall recycling. The polypeptide is Anhydro-N-acetylmuramic acid kinase (Shewanella baltica (strain OS185)).